The primary structure comprises 575 residues: Alpha-humulene synthase (575 aa).

Asp325, Asp329, Asp469, and Glu477 together coordinate Mg(2+). The DDXXD motif signature appears at 325 to 329 (DDLYD).

This sequence belongs to the terpene synthase family. Tpsa subfamily. The cofactor is Mg(2+). It depends on Mn(2+) as a cofactor.

The catalysed reaction is (2E,6E)-farnesyl diphosphate = alpha-humulene + diphosphate. Its pathway is sesquiterpene biosynthesis. It functions in the pathway terpene metabolism; oleoresin biosynthesis. In terms of biological role, terpene synthase (TPS) involved in the biosynthesis of sesquiterpene natural products included in conifer oleoresin secretions and volatile emissions; these compounds contribute to biotic and abiotic stress defense against herbivores and pathogens. Catalyzes the conversion of (2E,6E)-farnesyl diphosphate (FPP) to (1E,4E,8E)-alpha-humulene. This is Alpha-humulene synthase from Picea glauca (White spruce).